The primary structure comprises 352 residues: Ion-translocating oxidoreductase complex subunit D (352 aa).

The next 5 helical transmembrane spans lie at 20 to 40 (IMLL…WFFG), 42 to 62 (GTLV…ALVL), 78 to 109 (ALLT…VIIA), 123 to 143 (PAMI…TSWL), and 148 to 168 (IAVN…GHTA). Thr187 is subject to FMN phosphoryl threonine. Helical transmembrane passes span 214 to 234 (ILAG…GVWL), 242 to 262 (WHIP…GWLF), 267 to 287 (LAAP…FFIL), 301 to 321 (LIFG…GGYP), and 322 to 342 (DGVA…DYYT).

The protein belongs to the NqrB/RnfD family. In terms of assembly, the complex is composed of six subunits: RsxA, RsxB, RsxC, RsxD, RsxE and RsxG. FMN is required as a cofactor.

The protein localises to the cell inner membrane. Its function is as follows. Part of a membrane-bound complex that couples electron transfer with translocation of ions across the membrane. Required to maintain the reduced state of SoxR. Probably transfers electron from NAD(P)H to SoxR. The chain is Ion-translocating oxidoreductase complex subunit D from Escherichia coli (strain K12).